The sequence spans 175 residues: NADH-quinone oxidoreductase subunit I (175 aa).

4Fe-4S ferredoxin-type domains are found at residues 44–74 and 90–119; these read LNRYADGLEKCIGCELCAWACPADAIFVEGA and RVYQINYLRCIGCGLCIEACPTRALTMTND. The [4Fe-4S] cluster site is built by Cys-54, Cys-57, Cys-60, Cys-64, Cys-99, Cys-102, Cys-105, and Cys-109. Residues 148 to 175 are disordered; that stretch reads PPHAMAPGATDEDYYRGTVSPSAEADAR.

It belongs to the complex I 23 kDa subunit family. In terms of assembly, NDH-1 is composed of 14 different subunits. Subunits NuoA, H, J, K, L, M, N constitute the membrane sector of the complex. It depends on [4Fe-4S] cluster as a cofactor.

It is found in the cell membrane. It carries out the reaction a quinone + NADH + 5 H(+)(in) = a quinol + NAD(+) + 4 H(+)(out). Its function is as follows. NDH-1 shuttles electrons from NADH, via FMN and iron-sulfur (Fe-S) centers, to quinones in the respiratory chain. The immediate electron acceptor for the enzyme in this species is believed to be menaquinone. Couples the redox reaction to proton translocation (for every two electrons transferred, four hydrogen ions are translocated across the cytoplasmic membrane), and thus conserves the redox energy in a proton gradient. The polypeptide is NADH-quinone oxidoreductase subunit I (Mycolicibacterium gilvum (strain PYR-GCK) (Mycobacterium gilvum (strain PYR-GCK))).